The following is a 149-amino-acid chain: Large ribosomal subunit protein bL9 (149 aa).

Belongs to the bacterial ribosomal protein bL9 family.

In terms of biological role, binds to the 23S rRNA. The chain is Large ribosomal subunit protein bL9 from Alkaliphilus metalliredigens (strain QYMF).